The chain runs to 387 residues: Cystathionine beta-lyase (387 aa).

An N6-(pyridoxal phosphate)lysine modification is found at Lys-204.

It belongs to the trans-sulfuration enzymes family. As to quaternary structure, homotetramer. It depends on pyridoxal 5'-phosphate as a cofactor.

It localises to the cytoplasm. It catalyses the reaction L,L-cystathionine + H2O = L-homocysteine + pyruvate + NH4(+). The enzyme catalyses an S-substituted L-cysteine + H2O = a thiol + pyruvate + NH4(+). The protein operates within amino-acid biosynthesis; L-methionine biosynthesis via de novo pathway; L-homocysteine from L-cystathionine: step 1/1. Its function is as follows. Catalyzes the cleavage of cystathionine to homocysteine, pyruvate and ammonia during methionine biosynthesis. The sequence is that of Cystathionine beta-lyase (metC) from Coxiella burnetii (strain RSA 493 / Nine Mile phase I).